The following is a 159-amino-acid chain: Endoribonuclease YbeY (159 aa).

Residues H120, H124, and H130 each contribute to the Zn(2+) site.

The protein belongs to the endoribonuclease YbeY family. Zn(2+) is required as a cofactor.

It is found in the cytoplasm. Single strand-specific metallo-endoribonuclease involved in late-stage 70S ribosome quality control and in maturation of the 3' terminus of the 16S rRNA. This Parafrankia sp. (strain EAN1pec) protein is Endoribonuclease YbeY.